The sequence spans 408 residues: tRNA-specific 2-thiouridylase MnmA (408 aa).

Residues 38 to 45 (GMSGGVDS) and methionine 64 each bind ATP. Residues 124–126 (NPD) are interaction with target base in tRNA. The active-site Nucleophile is the cysteine 129. A disulfide bond links cysteine 129 and cysteine 231. An ATP-binding site is contributed by glycine 153. Residues 181-183 (KDQ) form an interaction with tRNA region. Cysteine 231 (cysteine persulfide intermediate) is an active-site residue. The interaction with tRNA stretch occupies residues 348 to 349 (RY).

Belongs to the MnmA/TRMU family.

The protein localises to the cytoplasm. It carries out the reaction S-sulfanyl-L-cysteinyl-[protein] + uridine(34) in tRNA + AH2 + ATP = 2-thiouridine(34) in tRNA + L-cysteinyl-[protein] + A + AMP + diphosphate + H(+). Catalyzes the 2-thiolation of uridine at the wobble position (U34) of tRNA, leading to the formation of s(2)U34. The polypeptide is tRNA-specific 2-thiouridylase MnmA (Psychrobacter arcticus (strain DSM 17307 / VKM B-2377 / 273-4)).